The primary structure comprises 730 residues: Jacalin-related lectin 5 (730 aa).

The Jacalin-type lectin 1 domain occupies 1–126 (MSWDDGKHTK…LNSIDAHFAP (126 aa)). Positions 121 to 450 (DAHFAPAPPP…GNQWDDGTDH (330 aa)) are disordered. 4 stretches are compositionally biased toward low complexity: residues 138-153 (GASGIGSDSGSIGSAG), 168-179 (AGGSKPSSGSAG), 196-207 (AGGSKPSSGSAG), and 248-261 (TEKNAGGSKSSSGS). The segment covering 275 to 307 (ETVSNIGDTESNAGGSKSNDGANNGASGIESNA) has biased composition (polar residues). Positions 314–323 (FGAGGTGGIG) are enriched in gly residues. Low complexity predominate over residues 343 to 358 (DGASGIGSNDGSTGTN). 2 stretches are compositionally biased toward polar residues: residues 366-375 (DSNIEGTENN) and 388-416 (IGNSDGSTGTSPEGTESNADGTKTNTGGK). A compositionally biased stretch (low complexity) spans 417-429 (ESNTGSESNTNSS). 2 consecutive Jacalin-type lectin domains span residues 430–572 (PQKL…YFVP) and 584–727 (PNKV…YFIP).

Belongs to the jacalin lectin family.

The polypeptide is Jacalin-related lectin 5 (JAL5) (Arabidopsis thaliana (Mouse-ear cress)).